The sequence spans 286 residues: 1D-myo-inositol 2-acetamido-2-deoxy-alpha-D-glucopyranoside deacetylase (286 aa).

Histidine 12, aspartate 15, and histidine 147 together coordinate Zn(2+).

It belongs to the MshB deacetylase family. Zn(2+) is required as a cofactor.

It carries out the reaction 1D-myo-inositol 2-acetamido-2-deoxy-alpha-D-glucopyranoside + H2O = 1D-myo-inositol 2-amino-2-deoxy-alpha-D-glucopyranoside + acetate. In terms of biological role, catalyzes the deacetylation of 1D-myo-inositol 2-acetamido-2-deoxy-alpha-D-glucopyranoside (GlcNAc-Ins) in the mycothiol biosynthesis pathway. This is 1D-myo-inositol 2-acetamido-2-deoxy-alpha-D-glucopyranoside deacetylase from Thermobifida fusca (strain YX).